A 149-amino-acid chain; its full sequence is Arginine repressor (149 aa).

This sequence belongs to the ArgR family.

The protein resides in the cytoplasm. Its pathway is amino-acid biosynthesis; L-arginine biosynthesis [regulation]. Functionally, regulates arginine biosynthesis genes. The polypeptide is Arginine repressor (Chlorobaculum tepidum (strain ATCC 49652 / DSM 12025 / NBRC 103806 / TLS) (Chlorobium tepidum)).